Reading from the N-terminus, the 447-residue chain is N-succinylarginine dihydrolase (447 aa).

Substrate contacts are provided by residues 19-28, asparagine 110, and 137-138; these read AGLSFGNEAS and HR. Residue glutamate 174 is part of the active site. Arginine 212 contributes to the substrate binding site. Histidine 248 is a catalytic residue. Positions 250 and 359 each coordinate substrate. Catalysis depends on cysteine 365, which acts as the Nucleophile.

This sequence belongs to the succinylarginine dihydrolase family. In terms of assembly, homodimer.

The enzyme catalyses N(2)-succinyl-L-arginine + 2 H2O + 2 H(+) = N(2)-succinyl-L-ornithine + 2 NH4(+) + CO2. It participates in amino-acid degradation; L-arginine degradation via AST pathway; L-glutamate and succinate from L-arginine: step 2/5. Its function is as follows. Catalyzes the hydrolysis of N(2)-succinylarginine into N(2)-succinylornithine, ammonia and CO(2). This is N-succinylarginine dihydrolase from Escherichia coli O139:H28 (strain E24377A / ETEC).